Here is a 330-residue protein sequence, read N- to C-terminus: tRNA uridine(34) hydroxylase (330 aa).

The 95-residue stretch at 123–217 (SDPEVILVDT…YLEEVKQEES (95 aa)) folds into the Rhodanese domain. The active-site Cysteine persulfide intermediate is C177.

Belongs to the TrhO family.

It catalyses the reaction uridine(34) in tRNA + AH2 + O2 = 5-hydroxyuridine(34) in tRNA + A + H2O. Functionally, catalyzes oxygen-dependent 5-hydroxyuridine (ho5U) modification at position 34 in tRNAs. The chain is tRNA uridine(34) hydroxylase from Shewanella sp. (strain MR-4).